The following is a 160-amino-acid chain: Ureidoglycolate lyase (160 aa).

This sequence belongs to the ureidoglycolate lyase family. As to quaternary structure, homodimer. Ni(2+) is required as a cofactor.

The enzyme catalyses (S)-ureidoglycolate = urea + glyoxylate. It participates in nitrogen metabolism; (S)-allantoin degradation. Its function is as follows. Catalyzes the catabolism of the allantoin degradation intermediate (S)-ureidoglycolate, generating urea and glyoxylate. Involved in the anaerobic utilization of allantoin as sole nitrogen source. Reinforces the induction of genes involved in the degradation of allantoin and glyoxylate by producing glyoxylate. This is Ureidoglycolate lyase from Escherichia coli O127:H6 (strain E2348/69 / EPEC).